The sequence spans 338 residues: DNA-directed RNA polymerase subunit alpha (338 aa).

Residues 1-234 (MIQKNWQELT…DQLNVFVNFE (234 aa)) are alpha N-terminal domain (alpha-NTD). The interval 250-338 (FNPALLKKVD…DLAKRFEEHY (89 aa)) is alpha C-terminal domain (alpha-CTD).

Belongs to the RNA polymerase alpha chain family. As to quaternary structure, homodimer. The RNAP catalytic core consists of 2 alpha, 1 beta, 1 beta' and 1 omega subunit. When a sigma factor is associated with the core the holoenzyme is formed, which can initiate transcription.

The enzyme catalyses RNA(n) + a ribonucleoside 5'-triphosphate = RNA(n+1) + diphosphate. In terms of biological role, DNA-dependent RNA polymerase catalyzes the transcription of DNA into RNA using the four ribonucleoside triphosphates as substrates. The chain is DNA-directed RNA polymerase subunit alpha from Methylocella silvestris (strain DSM 15510 / CIP 108128 / LMG 27833 / NCIMB 13906 / BL2).